The chain runs to 550 residues: Probable acyl-activating enzyme 6 (550 aa).

The protein belongs to the ATP-dependent AMP-binding enzyme family. Expressed at low levels in roots, leaves, stems and developing seeds.

May act as an acid--thiol ligase that activates carboxylic acids by forming acyl-CoAs. In Arabidopsis thaliana (Mouse-ear cress), this protein is Probable acyl-activating enzyme 6 (AAE6).